Here is a 552-residue protein sequence, read N- to C-terminus: Dihydroxy-acid dehydratase (552 aa).

Residue aspartate 78 participates in Mg(2+) binding. Cysteine 119 contributes to the [2Fe-2S] cluster binding site. Mg(2+)-binding residues include aspartate 120 and lysine 121. Lysine 121 is modified (N6-carboxylysine). Cysteine 191 contributes to the [2Fe-2S] cluster binding site. Glutamate 442 provides a ligand contact to Mg(2+). The Proton acceptor role is filled by serine 468.

This sequence belongs to the IlvD/Edd family. In terms of assembly, homodimer. Requires [2Fe-2S] cluster as cofactor. It depends on Mg(2+) as a cofactor.

It carries out the reaction (2R)-2,3-dihydroxy-3-methylbutanoate = 3-methyl-2-oxobutanoate + H2O. It catalyses the reaction (2R,3R)-2,3-dihydroxy-3-methylpentanoate = (S)-3-methyl-2-oxopentanoate + H2O. It participates in amino-acid biosynthesis; L-isoleucine biosynthesis; L-isoleucine from 2-oxobutanoate: step 3/4. The protein operates within amino-acid biosynthesis; L-valine biosynthesis; L-valine from pyruvate: step 3/4. In terms of biological role, functions in the biosynthesis of branched-chain amino acids. Catalyzes the dehydration of (2R,3R)-2,3-dihydroxy-3-methylpentanoate (2,3-dihydroxy-3-methylvalerate) into 2-oxo-3-methylpentanoate (2-oxo-3-methylvalerate) and of (2R)-2,3-dihydroxy-3-methylbutanoate (2,3-dihydroxyisovalerate) into 2-oxo-3-methylbutanoate (2-oxoisovalerate), the penultimate precursor to L-isoleucine and L-valine, respectively. The chain is Dihydroxy-acid dehydratase from Caldicellulosiruptor saccharolyticus (strain ATCC 43494 / DSM 8903 / Tp8T 6331).